The primary structure comprises 377 residues: Flap endonuclease 1 (377 aa).

Positions 1–105 are N-domain; it reads MGIKGLNAII…HELSKRTARR (105 aa). D34 serves as a coordination point for Mg(2+). 2 residues coordinate DNA: R47 and R71. D87 provides a ligand contact to Mg(2+). Residues 99 to 119 are disordered; it reads SKRTARREETEKKLQEATDQA. Residues 120–251 are I-domain; the sequence is EKMKQERRLV…VTALKLIKEY (132 aa). Mg(2+) contacts are provided by E156, E158, D177, and D179. E156 lines the DNA pocket. DNA contacts are provided by G229 and D231. D231 contributes to the Mg(2+) binding site. An interaction with PCNA region spans residues 338–346; sequence VQGRLDGFF.

Belongs to the XPG/RAD2 endonuclease family. FEN1 subfamily. Interacts with PCNA. Three molecules of FEN1 bind to one PCNA trimer with each molecule binding to one PCNA monomer. PCNA stimulates the nuclease activity without altering cleavage specificity. Mg(2+) is required as a cofactor. In terms of processing, phosphorylated. Phosphorylation upon DNA damage induces relocalization to the nuclear plasma.

Its subcellular location is the nucleus. The protein localises to the nucleolus. It localises to the nucleoplasm. The protein resides in the mitochondrion. Structure-specific nuclease with 5'-flap endonuclease and 5'-3' exonuclease activities involved in DNA replication and repair. During DNA replication, cleaves the 5'-overhanging flap structure that is generated by displacement synthesis when DNA polymerase encounters the 5'-end of a downstream Okazaki fragment. It enters the flap from the 5'-end and then tracks to cleave the flap base, leaving a nick for ligation. Also involved in the long patch base excision repair (LP-BER) pathway, by cleaving within the apurinic/apyrimidinic (AP) site-terminated flap. Acts as a genome stabilization factor that prevents flaps from equilibrating into structures that lead to duplications and deletions. Also possesses 5'-3' exonuclease activity on nicked or gapped double-stranded DNA, and exhibits RNase H activity. Also involved in replication and repair of rDNA and in repairing mitochondrial DNA. This Vanderwaltozyma polyspora (strain ATCC 22028 / DSM 70294 / BCRC 21397 / CBS 2163 / NBRC 10782 / NRRL Y-8283 / UCD 57-17) (Kluyveromyces polysporus) protein is Flap endonuclease 1.